Here is a 122-residue protein sequence, read N- to C-terminus: Protein SPIRAL1-like 3 (122 aa).

2 disordered regions span residues Met1–Phe78 and Lys96–Lys122. The segment covering Thr32–Thr61 has biased composition (low complexity). At Ser73 the chain carries Phosphoserine.

The protein belongs to the SPIRAL1 family. In terms of tissue distribution, ubiquitous. Preferentially expressed in above-ground organs.

Its function is as follows. Acts redundantly with SPR1 in maintaining the cortical microtubules organization essential for anisotropic cell growth. The protein is Protein SPIRAL1-like 3 (SP1L3) of Arabidopsis thaliana (Mouse-ear cress).